Consider the following 350-residue polypeptide: LysM domain-containing GPI-anchored protein 2 (350 aa).

Residues 1–23 form the signal peptide; that stretch reads METSCFTLLGLLVSLSFFLTLSA. N-linked (GlcNAc...) asparagine glycosylation is found at Asn30, Asn48, Asn76, and Asn99. 4 cysteine pairs are disulfide-bonded: Cys31–Cys97, Cys38–Cys161, Cys95–Cys159, and Cys97–Cys161. 2 consecutive LysM domains span residues 108 to 155 and 172 to 216; these read IEYT…KFWI and YAHV…PLDV. Residues 114–120 and 142–149 each bind chitin; these read KDDILSF and PDPNKIEI. N-linked (GlcNAc...) asparagine glycosylation is found at Asn193, Asn238, Asn258, Asn289, and Asn305. 2 disulfides stabilise this stretch: Cys221–Cys253 and Cys248–Cys277. Asp318 carries GPI-anchor amidated aspartate lipidation. Residues 319-350 constitute a propeptide, removed in mature form; the sequence is SAGPDNYASTLSSSFNFVIVLIQCALLCLCLL.

Forms homooligomers. Interacts with CERK1. Binds to chitin oligosaccharide elicitor.

The protein localises to the cell membrane. Its function is as follows. Chitin elicitor-binding protein involved in the perception of chitin oligosaccharide elicitor. The protein is LysM domain-containing GPI-anchored protein 2 (LYM2) of Arabidopsis thaliana (Mouse-ear cress).